The chain runs to 113 residues: UPF0122 protein PEPE_0845 (113 aa).

The protein belongs to the UPF0122 family.

In terms of biological role, might take part in the signal recognition particle (SRP) pathway. This is inferred from the conservation of its genetic proximity to ftsY/ffh. May be a regulatory protein. This chain is UPF0122 protein PEPE_0845, found in Pediococcus pentosaceus (strain ATCC 25745 / CCUG 21536 / LMG 10740 / 183-1w).